Here is a 454-residue protein sequence, read N- to C-terminus: Exopolyphosphatase PRUNE1 (454 aa).

N-acetylmethionine is present on Met1. Positions 28, 30, 106, and 179 each coordinate Mn(2+). The DHH motif signature appears at 106–108; the sequence is DHH. Positions 394 to 421 are essential for homodimerization; sequence SLISGLSQDEEDPPLPPTPMNSLVDECP. A disordered region spans residues 397-420; it reads SGLSQDEEDPPLPPTPMNSLVDEC. A Phosphoserine modification is found at Ser400. Thr411 is modified (phosphothreonine). Ser415 carries the phosphoserine modification.

The protein belongs to the PPase class C family. Prune subfamily. Homooligomer. Able to homodimerize via its C-terminal domain. Interacts with NME1. Interacts with GSK3; at focal adhesion complexes where paxillin and vinculin are colocalized. Interacts with alpha and beta tubulin. Mn(2+) is required as a cofactor.

It is found in the cytoplasm. It localises to the nucleus. The protein localises to the cell junction. Its subcellular location is the focal adhesion. It carries out the reaction diphosphate + H2O = 2 phosphate + H(+). Its activity is regulated as follows. Activated by magnesium ions and inhibited by manganese ions. Inhibited by dipyridamole, moderately sensitive to IBMX and inhibited by vinpocetine. Functionally, phosphodiesterase (PDE) that has higher activity toward cAMP than cGMP, as substrate. Plays a role in cell proliferation, migration and differentiation, and acts as a negative regulator of NME1. Plays a role in the regulation of neurogenesis. Involved in the regulation of microtubule polymerization. This is Exopolyphosphatase PRUNE1 (Prune1) from Mus musculus (Mouse).